Here is a 291-residue protein sequence, read N- to C-terminus: Potassium-transporting ATPase subunit beta (291 aa).

The Cytoplasmic portion of the chain corresponds to 1-36; it reads MAALQEKKTCGQRMEEFQRYCWNPDTGQMLGRTLSR. Residues 37–57 traverse the membrane as a helical; Signal-anchor for type II membrane protein segment; sequence WVWISLYYVAFYVVMTGLFAL. Residues 58–291 lie on the Extracellular side of the membrane; sequence CLYVLMQTVD…KVEFKLKIEK (234 aa). N-linked (GlcNAc...) asparagine glycans are attached at residues Asn-99, Asn-103, Asn-130, Asn-146, and Asn-161. A disulfide bridge links Cys-131 with Cys-152. Cys-162 and Cys-178 are oxidised to a cystine. N-linked (GlcNAc...) asparagine glycosylation is found at Asn-193 and Asn-222. The tract at residues 194–291 is immunoglobulin-like; sequence GSAPRVDCAF…KVEFKLKIEK (98 aa). Cysteines 201 and 263 form a disulfide.

It belongs to the X(+)/potassium ATPases subunit beta family. The ATPase pump is composed of two subunits: alpha (catalytic) and beta (regulatory). Interacts with alpha subunit ATP12A; this interaction is required for the formation of a functionally active pump and targeting at the plasma membrane. Interacts (via N-terminus) with alpha subunit ATP4A (via the P-domain). N-glycosylation is necessary for assembly and functional expression of the pump at the plasma membrane.

The protein localises to the apical cell membrane. It is found in the cell membrane. The beta subunit of the gastric H(+)/K(+) ATPase pump which transports H(+) ions in exchange for K(+) ions across the apical membrane of parietal cells. Plays a structural and regulatory role in the assembly and membrane targeting of a functionally active pump. Within a transport cycle, the transfer of a H(+) ion across the membrane is coupled to ATP hydrolysis and is associated with a transient phosphorylation of the alpha subunit that shifts the pump conformation from inward-facing (E1) to outward-facing state (E2). Interacts with the phosphorylation domain of the alpha subunit and functions as a ratchet, stabilizing the lumenal-open E2 conformation and preventing the reverse reaction of the transport cycle. This Homo sapiens (Human) protein is Potassium-transporting ATPase subunit beta.